The primary structure comprises 299 residues: tRNA dimethylallyltransferase (299 aa).

13-20 (GPTASGKT) lines the ATP pocket. 15–20 (TASGKT) is a substrate binding site. The segment at 38-41 (DSRQ) is interaction with substrate tRNA.

Belongs to the IPP transferase family. As to quaternary structure, monomer. The cofactor is Mg(2+).

It catalyses the reaction adenosine(37) in tRNA + dimethylallyl diphosphate = N(6)-dimethylallyladenosine(37) in tRNA + diphosphate. Catalyzes the transfer of a dimethylallyl group onto the adenine at position 37 in tRNAs that read codons beginning with uridine, leading to the formation of N6-(dimethylallyl)adenosine (i(6)A). In Prochlorococcus marinus (strain SARG / CCMP1375 / SS120), this protein is tRNA dimethylallyltransferase.